A 680-amino-acid polypeptide reads, in one-letter code: PAN2-PAN3 deadenylation complex subunit PAN3 (680 aa).

Disordered stretches follow at residues 1–26 (MATTRYNSNDFRRQLGSPRPKGRADT), 51–87 (HDQTKKSPKPDATTRKTLNVDSAPFTPAVSSQPSKKT), and 99–120 (FTPRATAATPTGTPTAQETDIP). Residues 25 to 54 (DTKDTLCRNILIYGHCRYEDAGCAFNHDQT) form a C3H1-type zinc finger. A compositionally biased stretch (basic and acidic residues) spans 52-64 (DQTKKSPKPDATT). A PABPC-interacting motif-2 (PAM-2) motif is present at residues 62-82 (ATTRKTLNVDSAPFTPAVSSQ). Positions 99-117 (FTPRATAATPTGTPTAQET) are enriched in low complexity. The pseudokinase domain stretch occupies residues 256–522 (QTMTGTAALQ…TVKNLVAGIN (267 aa)). ATP is bound by residues arginine 311, 360–367 (EYYPLAET), and 422–423 (TK). The stretch at 523–561 (EHVMTAFDAQQRQSDMLYSELYREVENGRVLRLLMKLAT) forms a coiled coil. Residues 562 to 680 (INERTEYDKD…VHHPSHRDRF (119 aa)) form a knob domain region. Residues 655 to 669 (SGNGRGGPVASGSGH) show a composition bias toward gly residues. The interval 655–680 (SGNGRGGPVASGSGHGVHHPSHRDRF) is disordered. Over residues 670 to 680 (GVHHPSHRDRF) the composition is skewed to basic residues.

It belongs to the protein kinase superfamily. PAN3 family. As to quaternary structure, homodimer. Forms a heterotrimer with a catalytic subunit PAN2 to form the poly(A)-nuclease (PAN) deadenylation complex. Interacts (via PAM-2 motif) with poly(A)-binding protein PAB1 (via PABC domain), conferring substrate specificity of the enzyme complex.

The protein localises to the cytoplasm. Functionally, regulatory subunit of the poly(A)-nuclease (PAN) deadenylation complex, one of two cytoplasmic mRNA deadenylases involved in mRNA turnover. PAN specifically shortens poly(A) tails of RNA and the activity is stimulated by poly(A)-binding protein PAB1. PAN deadenylation is followed by rapid degradation of the shortened mRNA tails by the CCR4-NOT complex. Deadenylated mRNAs are then degraded by two alternative mechanisms, namely exosome-mediated 3'-5' exonucleolytic degradation, or deadenylation-dependent mRNA decaping and subsequent 5'-3' exonucleolytic degradation by XRN1. May also be involved in post-transcriptional maturation of mRNA poly(A) tails. PAN3 acts as a positive regulator for PAN activity, recruiting the catalytic subunit PAN2 to mRNA via its interaction with RNA and with PAB1. The polypeptide is PAN2-PAN3 deadenylation complex subunit PAN3 (Pyricularia oryzae (strain 70-15 / ATCC MYA-4617 / FGSC 8958) (Rice blast fungus)).